Consider the following 185-residue polypeptide: Peptidyl-tRNA hydrolase (185 aa).

Residue Tyr-14 coordinates tRNA. His-19 serves as the catalytic Proton acceptor. The tRNA site is built by Tyr-65, Asn-67, and Asn-113.

The protein belongs to the PTH family. As to quaternary structure, monomer.

Its subcellular location is the cytoplasm. The catalysed reaction is an N-acyl-L-alpha-aminoacyl-tRNA + H2O = an N-acyl-L-amino acid + a tRNA + H(+). Hydrolyzes ribosome-free peptidyl-tRNAs (with 1 or more amino acids incorporated), which drop off the ribosome during protein synthesis, or as a result of ribosome stalling. In terms of biological role, catalyzes the release of premature peptidyl moieties from peptidyl-tRNA molecules trapped in stalled 50S ribosomal subunits, and thus maintains levels of free tRNAs and 50S ribosomes. The polypeptide is Peptidyl-tRNA hydrolase (Rickettsia prowazekii (strain Madrid E)).